We begin with the raw amino-acid sequence, 1373 residues long: MTNCEKDEEFVCISCVEEVRYSFVSHLSEALRRKGINNVVVDVDIDDLLFKESQAKIEKAGVSVMVLPGNCDPSEVWLDKFAKVLECQRNNKDQAVVSVLYGDSLLRDQWLSELDFRGLSRIHQSRKECSDSILVEEIVRDVYETHFYVGRIGIYSKLLEIENMVNKQPIGIRCVGIWGMPGIGKTTLAKAVFDQMSSAFDASCFIEDYDKSIHEKGLYCLLEEQLLPGNDATIMKLNSLRDRLNSKRVLVVLDDVCNALVAESFLEGFDWLGPGSLIIITSRDKQVFRLCGINQIYEVQGLNEKEARQLFLLSASIKEDMGEQNLHELSVRVISYANGNPLAISVYGRELKGKKKLSEMETAFLKLKRRPPFKIVDAFKSSYDTLSDNEKNIFLDIACFFQGENVNYVIQLLEGCGFFPHVEIDVLVDKCLVTISENRVWLHKLTQDIGREIINGETVQIERRRRLWEPWSIKYLLEYNEHKANGEPKTTFKRAQGSEEIEGLFLDTSNLRFDLQPSAFKNMLNLRLLKIYCSNPEVHPVINFPTGSLHSLPNELRLLHWENYPLKSLPQNFDPRHLVEINMPYSQLQKLWGGTKNLEMLRTIRLCHSQHLVDIDDLLKAENLEVIDLQGCTRLQNFPAAGRLLRLRVVNLSGCIKIKSVLEIPPNIEKLHLQGTGILALPVSTVKPNHRELVNFLTEIPGLSEASKLERLTSLLESNSSCQDLGKLICLELKDCSCLQSLPNMANLDLNVLDLSGCSSLNSIQGFPRFLKQLYLGGTAIREVPQLPQSLEILNAHGSCLRSLPNMANLEFLKVLDLSGCSELETIQGFPRNLKELYFAGTTLREVPQLPLSLEVLNAHGSDSEKLPMHYKFNNFFDLSQQVVNDFFLKALTYVKHIPRGYTQELINKAPTFSFSAPSHTNQNATFDLQPGSSVMTRLNHSWRNTLVGFGMLVEVAFPEDYCDATDVGISCVCRWSNKEGRSCRIERNFHCWAPGKVVPKVRKDHTFVFSDVNMRPSTGEGNDPDIWAGLVVFEFFPINQQTKCLNDRFTVTRCGVRVINVATGNTSLENISLVLSLDPVEVSGYEVLRVSYDDLQEMDKVLFLYIASLFNDEDVDFVAPLIAGIDLDVSSGLKVLADVSLISVSSNGEIVMHSLQRQMGKEILHGQSMLLSDCESSMTENLSDVPKKEKKHRESKVKKVVSIPAIDEGDLWTWRKYGQKDILGSRFPRGYYRCAYKFTHGCKATKQVQRSETDSNMLAITYLSEHNHPRPTKRKALADSTRSTSSSICSAITTSASSRVFQNKDEPNKPHLPSSSTPPGNAAVLFKMTDMEEFQDNMEVDNDVVDTRTLALFPEFQHQPEEEYPWSTFFDD.

The region spanning 5 to 146 (EKDEEFVCIS…EIVRDVYETH (142 aa)) is the TIR domain. Residues 170–421 (IGIRCVGIWG…LLEGCGFFPH (252 aa)) form the NB-ARC domain. 179–186 (GMPGIGKT) lines the ATP pocket. LRR repeat units follow at residues 498-522 (SEEIEGLFLDTSNLRFDLQPSAFKN), 535-553 (NPEVHPVINFPTGSLHSLP), 554-575 (NELRLLHWENYPLKSLPQNFDP), 577-598 (HLVEINMPYSQLQKLWGGTKNL), 621-646 (AENLEVIDLQGCTRLQNFPAAGRLLR), 665-688 (PPNIEKLHLQGTGILALPVSTVKP), 742-766 (LPNMANLDLNVLDLSGCSSLNSIQG), 768-793 (PRFLKQLYLGGTAIREVPQLPQSLEI), and 831-854 (PRNLKELYFAGTTLREVPQLPLSL). Positions 988 to 1005 (RNFHCWAPGKVVPKVRKD) match the Nuclear localization signal motif. The WRKY DNA-binding region spans 1204 to 1272 (IPAIDEGDLW…YLSEHNHPRP (69 aa)). A disordered region spans residues 1300-1323 (RVFQNKDEPNKPHLPSSSTPPGNA).

Interacts with PopP2, a R.solanacearum type III effector.

It is found in the nucleus. Transcription factor. Interacts specifically with the W box (5'-(T)TGAC[CT]-3'), a frequently occurring elicitor-responsive cis-acting element. Also acts as a disease resistance protein involved in resistance to fungal and bacterial pathogens, including R.solanacearum, P.syringae pv. tomato and C.higginsianum. This chain is Disease resistance protein RRS1, found in Arabidopsis thaliana (Mouse-ear cress).